Consider the following 98-residue polypeptide: UPF0235 protein Ping_3043 (98 aa).

It belongs to the UPF0235 family.

The polypeptide is UPF0235 protein Ping_3043 (Psychromonas ingrahamii (strain DSM 17664 / CCUG 51855 / 37)).